Here is a 299-residue protein sequence, read N- to C-terminus: Recombination-associated protein RdgC (299 aa).

This sequence belongs to the RdgC family.

The protein resides in the cytoplasm. Its subcellular location is the nucleoid. Functionally, may be involved in recombination. In Cupriavidus pinatubonensis (strain JMP 134 / LMG 1197) (Cupriavidus necator (strain JMP 134)), this protein is Recombination-associated protein RdgC.